We begin with the raw amino-acid sequence, 107 residues long: U1-lycotoxin-Ls1v (107 aa).

The signal sequence occupies residues 1–20 (MMKVLVVVALLVTLISYSSS). A propeptide spanning residues 21-41 (EGIDDLEADELLSLTANEQTR) is cleaved from the precursor. 4 cysteine pairs are disulfide-bonded: cysteine 44–cysteine 59, cysteine 51–cysteine 68, cysteine 58–cysteine 86, and cysteine 70–cysteine 84.

This sequence belongs to the neurotoxin 19 (CSTX) family. 04 (U1-Lctx) subfamily. In terms of tissue distribution, expressed by the venom gland.

It is found in the secreted. The chain is U1-lycotoxin-Ls1v from Lycosa singoriensis (Wolf spider).